A 95-amino-acid chain; its full sequence is MTKSELIEKLATRQSQLSAKEVEAAIKEMLEQMADTLETGDRIEIRGFGSFSLHYRAPRTGRNPKTGTSVELEGKYVPHFKPGKELRERVDAINT.

It belongs to the bacterial histone-like protein family. Heterodimer of an alpha and a beta chain.

This protein is one of the two subunits of integration host factor, a specific DNA-binding protein that functions in genetic recombination as well as in transcriptional and translational control. The chain is Integration host factor subunit beta from Shewanella pealeana (strain ATCC 700345 / ANG-SQ1).